A 594-amino-acid polypeptide reads, in one-letter code: Interactor of HORMAD1 protein 1 (594 aa).

3 coiled-coil regions span residues 109-135 (VGKS…SETL), 165-189 (QSIL…NDLV), and 219-245 (EMKS…CEQL). Residues 434–443 (VEMRGKDKKQ) show a composition bias toward basic and acidic residues. Positions 434 to 454 (VEMRGKDKKQQPRKAHRAHRG) are disordered. Positions 444-454 (QPRKAHRAHRG) are enriched in basic residues. A phosphoserine mark is found at serine 588 and serine 589.

Part of the MCD recombinosome complex, at least composed of IHO1, REC114 and MEI4. Interacts with REC114. Interacts with MEI4. Interacts with HORMAD1. Interacts with ANKRD31.

The protein resides in the chromosome. Its function is as follows. Required for DNA double-strand breaks (DSBs) formation in unsynapsed regions during meiotic recombination. Probably acts by forming a complex with MEI4 and REC114, which activates DSBs formation in unsynapsed regions, an essential step to ensure completion of synapsis. Not required for HORMAD1 functions in pairing-independent synaptonemal complex formation, ATR recruitment to unsynapsed axes, meiotic silencing of unsynapsed chromatin (MSUC) or meiotic surveillance. This is Interactor of HORMAD1 protein 1 from Homo sapiens (Human).